The following is a 335-amino-acid chain: 2,4-dienoyl-CoA reductase [(3E)-enoyl-CoA-producing], mitochondrial (335 aa).

The transit peptide at methionine 1 to glutamine 34 directs the protein to the mitochondrion. 2 positions are modified to N6-acetyllysine; alternate: lysine 42 and lysine 49. Residues lysine 42 and lysine 49 each carry the N6-succinyllysine; alternate modification. NADP(+) is bound at residue glycine 66–leucine 71. At threonine 69 the chain carries Phosphothreonine. An N6-succinyllysine modification is found at lysine 73. An NADP(+)-binding site is contributed by arginine 91. Residue arginine 91 coordinates substrate. Lysine 97 carries the N6-acetyllysine; alternate modification. Position 97 is an N6-succinyllysine; alternate (lysine 97). Residue aspartate 117 coordinates NADP(+). Substrate is bound by residues arginine 119, phenylalanine 149, and serine 157. The active-site Proton acceptor is tyrosine 199. Residue lysine 214 participates in NADP(+) binding. Lysine 230 bears the N6-acetyllysine mark. Proline 240–isoleucine 243 contributes to the NADP(+) binding site. The residue at position 244 (lysine 244) is an N6-acetyllysine; alternate. Residue lysine 244 is modified to N6-succinyllysine; alternate. Arginine 251 contributes to the substrate binding site. Residues lysine 260 and lysine 319 each carry the N6-acetyllysine; alternate modification. Residues lysine 260 and lysine 319 each carry the N6-succinyllysine; alternate modification.

The protein belongs to the short-chain dehydrogenases/reductases (SDR) family. 2,4-dienoyl-CoA reductase subfamily. As to quaternary structure, homotetramer. Heart = liver = pancreas &gt; kidney &gt;&gt; skeletal muscle = lung.

It is found in the mitochondrion. The catalysed reaction is a (2E,4E)-dienoyl-CoA + NADPH + H(+) = a 4,5-saturated-(3E)-enoyl-CoA + NADP(+). It catalyses the reaction a (2E,4Z)-dienoyl-CoA + NADPH + H(+) = a 4,5-saturated-(3E)-enoyl-CoA + NADP(+). The enzyme catalyses (2E,4E)-hexadienoyl-CoA + NADPH + H(+) = (3E)-hexenoyl-CoA + NADP(+). Auxiliary enzyme of beta-oxidation. It participates in the metabolism of unsaturated fatty enoyl-CoA esters having double bonds in both even- and odd-numbered positions in mitochondria. Catalyzes the NADP-dependent reduction of 2,4-dienoyl-CoA to yield trans-3-enoyl-CoA. This chain is 2,4-dienoyl-CoA reductase [(3E)-enoyl-CoA-producing], mitochondrial (DECR1), found in Homo sapiens (Human).